A 435-amino-acid polypeptide reads, in one-letter code: S-locus-specific glycoprotein BS29-2 (435 aa).

Positions 1 to 30 are cleaved as a signal peptide; sequence MKGVGKPYENSHTSFLLVFFVLTLFSPAFS. The Bulb-type lectin domain maps to 33 to 155; sequence TLSSIESLKI…NKNDRSGFLW (123 aa). N-linked (GlcNAc...) asparagine glycosylation is found at N113, N120, N244, N260, and N389. A PAN domain is found at 350–430; sequence CSGDGFTRMK…NGQDLYVRLA (81 aa). Intrachain disulfides connect C380–C405 and C388–C390.

In terms of tissue distribution, stigma.

Functionally, involved in sporophytic self-incompatibility system (the inability of flowering plants to achieve self-fertilization). This Brassica oleracea var. alboglabra (Chinese kale) protein is S-locus-specific glycoprotein BS29-2 (SLSG).